The chain runs to 506 residues: MSQENSVHRSSTKKTPIKIAFIHPDLGIGGAERLVVDAAVGLQSLGKEVVVFTSHCDKKHCFEEIRDGTIKVKVYGDWLPSSIFGRLSIFCSSLRQVYLTMILLTNYMHFDAIIVDQLSTCVPFLLLASQMILFYCHFPDKYLAKRGGILKKLYRIPFDTVEAESVRLADRIVVNSKFTASVFKKAFPKIRKPLRIVHPCVDIEAASKPLEFQLPEKILQRKLLISVNRFERKKDIRLAIDAFSALRDLSANRFPEYLLLVAGGYDIRVSENRRYLKELQEFCEQKDLSYTTVKDNWDNITVAPSTNVLFLLSVPSKVRDALISSSRILLYTPENEHFGIVPLEAMLRKVPVLAQTNGGPLETVIDGKNGWLRPRDAKIWGNVIYEATTSTTYDTAAMGEAGSEWVKNEFSTDAMARKFESEIMSGIRSITPEKRLMRRVNGLLAVFVLFMLFWGTCIIAATVPFAIIKLYFAQTYSSVKLGFMLGTCIVSVSFLTFTVYAKLTNL.

The next 2 membrane-spanning stretches (helical) occupy residues 82–104 (SIFG…MILL) and 118–138 (LSTC…YCHF). The N-linked (GlcNAc...) asparagine glycan is linked to Asn299. The next 2 membrane-spanning stretches (helical) occupy residues 443 to 463 (LLAV…AATV) and 481 to 501 (LGFM…TVYA).

It belongs to the glycosyltransferase group 1 family. Glycosyltransferase 4 subfamily.

The protein localises to the endoplasmic reticulum membrane. It catalyses the reaction a beta-D-Man-(1-&gt;4)-beta-D-GlcNAc-(1-&gt;4)-alpha-D-GlcNAc-diphospho-di-trans,poly-cis-dolichol + GDP-alpha-D-mannose = an alpha-D-Man-(1-&gt;3)-beta-D-Man-(1-&gt;4)-beta-D-GlcNAc-(1-&gt;4)-alpha-D-GlcNAc-diphospho-di-trans,poly-cis-dolichol + GDP + H(+). The enzyme catalyses an alpha-D-Man-(1-&gt;3)-beta-D-Man-(1-&gt;4)-beta-D-GlcNAc-(1-&gt;4)-alpha-D-GlcNAc-diphospho-di-trans,poly-cis-dolichol + GDP-alpha-D-mannose = an alpha-D-Man-(1-&gt;3)-[alpha-D-Man-(1-&gt;6)]-beta-D-Man-(1-&gt;4)-beta-D-GlcNAc-(1-&gt;4)-alpha-D-GlcNAc-diphospho-di-trans,poly-cis-dolichol + GDP + H(+). The protein operates within protein modification; protein glycosylation. Its function is as follows. Mannosylates Man(2)GlcNAc(2)-dolichol diphosphate and Man(1)GlcNAc(2)-dolichol diphosphate to form Man(3)GlcNAc(2)-dolichol diphosphate. The protein is Alpha-1,3/1,6-mannosyltransferase alg2 (alg2) of Schizosaccharomyces pombe (strain 972 / ATCC 24843) (Fission yeast).